A 992-amino-acid chain; its full sequence is MADKIFTFFLILSSISPLLCSSLISPLNLSLIRQANVLISLKQSFDSYDPSLDSWNIPNFNSLCSWTGVSCDNLNQSITRLDLSNLNISGTISPEISRLSPSLVFLDISSNSFSGELPKEIYELSGLEVLNISSNVFEGELETRGFSQMTQLVTLDAYDNSFNGSLPLSLTTLTRLEHLDLGGNYFDGEIPRSYGSFLSLKFLSLSGNDLRGRIPNELANITTLVQLYLGYYNDYRGGIPADFGRLINLVHLDLANCSLKGSIPAELGNLKNLEVLFLQTNELTGSVPRELGNMTSLKTLDLSNNFLEGEIPLELSGLQKLQLFNLFFNRLHGEIPEFVSELPDLQILKLWHNNFTGKIPSKLGSNGNLIEIDLSTNKLTGLIPESLCFGRRLKILILFNNFLFGPLPEDLGQCEPLWRFRLGQNFLTSKLPKGLIYLPNLSLLELQNNFLTGEIPEEEAGNAQFSSLTQINLSNNRLSGPIPGSIRNLRSLQILLLGANRLSGQIPGEIGSLKSLLKIDMSRNNFSGKFPPEFGDCMSLTYLDLSHNQISGQIPVQISQIRILNYLNVSWNSFNQSLPNELGYMKSLTSADFSHNNFSGSVPTSGQFSYFNNTSFLGNPFLCGFSSNPCNGSQNQSQSQLLNQNNARSRGEISAKFKLFFGLGLLGFFLVFVVLAVVKNRRMRKNNPNLWKLIGFQKLGFRSEHILECVKENHVIGKGGRGIVYKGVMPNGEEVAVKKLLTITKGSSHDNGLAAEIQTLGRIRHRNIVRLLAFCSNKDVNLLVYEYMPNGSLGEVLHGKAGVFLKWETRLQIALEAAKGLCYLHHDCSPLIIHRDVKSNNILLGPEFEAHVADFGLAKFMMQDNGASECMSSIAGSYGYIAPEYAYTLRIDEKSDVYSFGVVLLELITGRKPVDNFGEEGIDIVQWSKIQTNCNRQGVVKIIDQRLSNIPLAEAMELFFVAMLCVQEHSVERPTMREVVQMISQAKQPNTF.

Positions 1–21 (MADKIFTFFLILSSISPLLCS) are cleaved as a signal peptide. Over 22–656 (SLISPLNLSL…ARSRGEISAK (635 aa)) the chain is Extracellular. A glycan (N-linked (GlcNAc...) asparagine) is linked at Asn28. An intrachain disulfide couples Cys64 to Cys71. Asn75 and Asn87 each carry an N-linked (GlcNAc...) asparagine glycan. LRR repeat units lie at residues 75–99 (NQSI…ISRL), 100–124 (SPSL…IYEL), 126–148 (GLEV…GFSQ), 150–173 (TQLV…LTTL), 174–199 (TRLE…SFLS), and 201–221 (KFLS…LANI). N-linked (GlcNAc...) asparagine glycans are attached at residues Asn131 and Asn163. A glycan (N-linked (GlcNAc...) asparagine) is linked at Asn220. Residues 226–231 (QLYLGY) carry the CLE45 peptide binding motif. LRR repeat units follow at residues 246-270 (LINL…LGNL), 271-294 (KNLE…LGNM), 296-320 (SLKT…GLQK), 322-342 (QLFN…VSEL), 343-366 (PDLQ…LGSN), 368-391 (NLIE…CFGR), 393-414 (LKIL…LGQC), 415-438 (EPLW…LIYL), 439-462 (PNLS…EAGN), 465-489 (FSSL…IRNL), 491-513 (SLQI…IGSL), 514-536 (KSLL…EFGD), 537-561 (CMSL…ISQI), 563-585 (ILNY…LGYM), and 586-610 (KSLT…QFSY). N-linked (GlcNAc...) asparagine glycosylation is found at Asn256 and Asn293. The N-linked (GlcNAc...) asparagine glycan is linked to Asn354. N-linked (GlcNAc...) asparagine glycosylation is found at Asn440 and Asn472. An N-linked (GlcNAc...) asparagine glycan is attached at Asn525. N-linked (GlcNAc...) asparagine glycans are attached at residues Asn568, Asn575, Asn597, Asn613, Asn631, and Asn635. The chain crosses the membrane as a helical span at residues 657 to 677 (FKLFFGLGLLGFFLVFVVLAV). Topologically, residues 678 to 992 (VKNRRMRKNN…ISQAKQPNTF (315 aa)) are cytoplasmic. One can recognise a Protein kinase domain in the interval 710 to 992 (VKENHVIGKG…ISQAKQPNTF (283 aa)). Residues 716–724 (IGKGGRGIV) and Lys738 each bind ATP. The Proton acceptor role is filled by Asp836.

Belongs to the protein kinase superfamily. Ser/Thr protein kinase family. In terms of assembly, interacts with CLE45, especially in roots. Binds to the dimer CLV2/CRN. In terms of tissue distribution, expressed in seedlings, roots, leaves, stems, inflorescences, flowers and siliques. In roots, confined to protophloem and sieve element precursor cells.

The protein localises to the cell membrane. It localises to the endoplasmic reticulum membrane. The enzyme catalyses L-seryl-[protein] + ATP = O-phospho-L-seryl-[protein] + ADP + H(+). It catalyses the reaction L-threonyl-[protein] + ATP = O-phospho-L-threonyl-[protein] + ADP + H(+). Its function is as follows. Necessary for male gametophyte development, as well as ovule specification and function. Required for the development of high-ordered vascular strands within the leaf and a correlated control of leaf shape, size and symmetry. LRR-rich receptor-like kinase (LRR-RLK) involved in the perception of CLE45 peptide ligand which mediates root growth inhibition by repressing protophloem differentiation; this mechanism requires CRN. BRX, BAM3, and CLE45 act together to regulate the transition of protophloem cells from proliferation to differentiation, thus impinging on postembryonic growth capacity of the root meristem. Necessary for CLE45 peptide-triggered accumulation of MAKR5 in developing sieve elements. The protein is Leucine-rich repeat receptor-like serine/threonine-protein kinase BAM3 of Arabidopsis thaliana (Mouse-ear cress).